Consider the following 276-residue polypeptide: Protein-glutamine gamma-glutamyltransferase (276 aa).

Belongs to the bacillus TGase family.

The catalysed reaction is L-glutaminyl-[protein] + L-lysyl-[protein] = [protein]-L-lysyl-N(6)-5-L-glutamyl-[protein] + NH4(+). Its function is as follows. Probably plays a role in the assembly of the spore coat proteins by catalyzing epsilon-(gamma-glutamyl)lysine cross-links. The protein is Protein-glutamine gamma-glutamyltransferase of Bacillus anthracis (strain A0248).